We begin with the raw amino-acid sequence, 159 residues long: MKINIMAVGKIKEDYINAGIKEFLKRLKPYTEVNVIEVDDERIPPNASGAQIEKVKEKEGERLLKNVPKNSYVIVLDVKGKPMTSEGLAKSIQNLQLQGYSNITFIIGGALGLSQKVLDTGDYILSFSHMTFTHQMIRLILLEQLYRAFKIIKGEPYHK.

Residues L76, G108, and F127–F132 each bind S-adenosyl-L-methionine.

The protein belongs to the RNA methyltransferase RlmH family. In terms of assembly, homodimer.

The protein localises to the cytoplasm. It carries out the reaction pseudouridine(1915) in 23S rRNA + S-adenosyl-L-methionine = N(3)-methylpseudouridine(1915) in 23S rRNA + S-adenosyl-L-homocysteine + H(+). Specifically methylates the pseudouridine at position 1915 (m3Psi1915) in 23S rRNA. In Halothermothrix orenii (strain H 168 / OCM 544 / DSM 9562), this protein is Ribosomal RNA large subunit methyltransferase H.